We begin with the raw amino-acid sequence, 201 residues long: dCTP deaminase, dUMP-forming (201 aa).

DCTP-binding positions include 117 to 122 (RSSFGR), Asp135, 143 to 145 (TLE), Gln163, Tyr177, and Gln188. The active-site Proton donor/acceptor is Glu145.

Belongs to the dCTP deaminase family. In terms of assembly, homotrimer.

It carries out the reaction dCTP + 2 H2O = dUMP + NH4(+) + diphosphate. Its pathway is pyrimidine metabolism; dUMP biosynthesis; dUMP from dCTP: step 1/1. Its function is as follows. Bifunctional enzyme that catalyzes both the deamination of dCTP to dUTP and the hydrolysis of dUTP to dUMP without releasing the toxic dUTP intermediate. The chain is dCTP deaminase, dUMP-forming from Methanococcus aeolicus (strain ATCC BAA-1280 / DSM 17508 / OCM 812 / Nankai-3).